Here is a 67-residue protein sequence, read N- to C-terminus: Protein SlyX homolog (67 aa).

Over residues 48–60 the composition is skewed to polar residues; it reads TSAPSTAAESNPQ. The interval 48–67 is disordered; it reads TSAPSTAAESNPQHEIPPHY.

This sequence belongs to the SlyX family.

This chain is Protein SlyX homolog, found in Cupriavidus pinatubonensis (strain JMP 134 / LMG 1197) (Cupriavidus necator (strain JMP 134)).